A 164-amino-acid polypeptide reads, in one-letter code: MTFATTDLCDAHEDKLAAGTLRVLQPALRPYGGAARFAGPAATLKVFEDNTLVRAALEQDGGGRVLVVDGGASLRCALVGGNLGALAEKNGWAGIVVHGCVRDAAELRECKVGVLALATHPRKSDKRGAGERDVPVTVLGTRIAPGEWIYADDDGVLVSATSLT.

Residues 80–83 (GGNL) and Arg-102 contribute to the substrate site. Residue Asp-103 participates in a divalent metal cation binding.

Belongs to the class II aldolase/RraA-like family. In terms of assembly, homotrimer. A divalent metal cation is required as a cofactor.

The catalysed reaction is 4-hydroxy-4-methyl-2-oxoglutarate = 2 pyruvate. The enzyme catalyses oxaloacetate + H(+) = pyruvate + CO2. Functionally, catalyzes the aldol cleavage of 4-hydroxy-4-methyl-2-oxoglutarate (HMG) into 2 molecules of pyruvate. Also contains a secondary oxaloacetate (OAA) decarboxylase activity due to the common pyruvate enolate transition state formed following C-C bond cleavage in the retro-aldol and decarboxylation reactions. The sequence is that of Putative 4-hydroxy-4-methyl-2-oxoglutarate aldolase from Burkholderia multivorans (strain ATCC 17616 / 249).